Reading from the N-terminus, the 628-residue chain is Nucleoside-triphosphatase 2 (628 aa).

The first 25 residues, 1–25 (MWLPVYVPLLLVFGVSLSLPHGSLG), serve as a signal peptide directing secretion. The active-site Proton acceptor is the E236. An N-linked (GlcNAc...) asparagine glycan is attached at N432.

The protein belongs to the GDA1/CD39 NTPase family. As to quaternary structure, homotetramer.

It localises to the secreted. Its subcellular location is the parasitophorous vacuole. It carries out the reaction a ribonucleoside 5'-triphosphate + H2O = a ribonucleoside 5'-diphosphate + phosphate + H(+). In terms of biological role, may perform an important processing step in the conversion of high energy nucleotides prior to uptake by the parasite. NTPAse-II has a specific activity 4.5-fold lower than NTPAse-I in hydrolysis of ATP. The primary difference between these isozymes lies in their ability to hydrolyze nucleoside triphosphate versus diphosphate substrates. While NTPAse-II hydrolyzes ATP to ADP and ADP to AMP at almost the same rate, NTPAse-I hydrolyzes ADP to AMP at a much slower rate (0.7% of the rate for ATP). This is Nucleoside-triphosphatase 2 (NTP1) from Toxoplasma gondii.